A 197-amino-acid chain; its full sequence is Casparian strip membrane protein 3 (197 aa).

The Cytoplasmic segment spans residues 1-35 (MSARVDIPADTSAAAKGTAPLIAASTHVKGGYKKG). A helical membrane pass occupies residues 36–56 (LAIFDLVLRLGAVVTALAAAA). At 57–85 (TMGTTDQTLPFFTQFFQFQASYDDLPTFQ) the chain is on the extracellular side. A helical membrane pass occupies residues 86 to 106 (FFVIAMAIVSGYLVLSLPFSI). The Cytoplasmic segment spans residues 107-119 (VAIIRPHATGPRL). Residues 120-140 (LLIILDTVALTLNTAAAAAAV) form a helical membrane-spanning segment. Residues 141 to 171 (AIVDLAQNGNSSANWLGICQQFGDFCQKASG) are Extracellular-facing. N-linked (GlcNAc...) asparagine glycosylation is present at Asn-150. A helical transmembrane segment spans residues 172–192 (AVVASFIAAGVLLFLIVISAL). The Cytoplasmic segment spans residues 193 to 197 (ALRKR).

This sequence belongs to the Casparian strip membrane proteins (CASP) family. As to quaternary structure, homodimer and heterodimers.

The protein localises to the cell membrane. In terms of biological role, regulates membrane-cell wall junctions and localized cell wall deposition. Required for establishment of the Casparian strip membrane domain (CSD) and the subsequent formation of Casparian strips, a cell wall modification of the root endodermis that determines an apoplastic barrier between the intraorganismal apoplasm and the extraorganismal apoplasm and prevents lateral diffusion. This Populus trichocarpa (Western balsam poplar) protein is Casparian strip membrane protein 3.